Reading from the N-terminus, the 740-residue chain is Ethylene receptor 1 (740 aa).

A run of 3 helical transmembrane segments spans residues 23–43, 54–74, and 92–112; these read ISDFFIALAYFSIPLELIYFV, VLVQFGAFIVLCGATHLINLW, and VLTAVVSCATALMLVHIIPDL. Residues C65 and H69 each contribute to the Cu cation site. Residues 158–307 form the GAF domain; sequence DRHTILKTTL…VVADQVAVAL (150 aa). Residues 350–588 enclose the Histidine kinase domain; that stretch reads VMNHEMRTPM…TFIVKLGIAD (239 aa). Position 353 is a phosphohistidine; by autocatalysis (H353). Residues 614-731 form the Response regulatory domain; that stretch reads KVLVMDDNGV…KMRSVLSELI (118 aa). D662 carries the post-translational modification 4-aspartylphosphate.

It belongs to the ethylene receptor family. As to quaternary structure, homodimer; disulfide-linked. The cofactor is Cu cation. Activation probably requires a transfer of a phosphate group between a His in the transmitter domain and an Asp of the receiver domain. In seeds and placenta.

Its subcellular location is the endoplasmic reticulum membrane. It carries out the reaction ATP + protein L-histidine = ADP + protein N-phospho-L-histidine.. Its function is as follows. May act early in the ethylene signal transduction pathway, possibly as an ethylene receptor, or as a regulator of the pathway. The polypeptide is Ethylene receptor 1 (ETR1) (Cucumis melo var. cantalupensis (Netted muskmelon)).